A 240-amino-acid chain; its full sequence is 1-(5-phosphoribosyl)-5-[(5-phosphoribosylamino)methylideneamino] imidazole-4-carboxamide isomerase (240 aa).

D8 acts as the Proton acceptor in catalysis. D129 serves as the catalytic Proton donor.

Belongs to the HisA/HisF family.

Its subcellular location is the cytoplasm. The catalysed reaction is 1-(5-phospho-beta-D-ribosyl)-5-[(5-phospho-beta-D-ribosylamino)methylideneamino]imidazole-4-carboxamide = 5-[(5-phospho-1-deoxy-D-ribulos-1-ylimino)methylamino]-1-(5-phospho-beta-D-ribosyl)imidazole-4-carboxamide. Its pathway is amino-acid biosynthesis; L-histidine biosynthesis; L-histidine from 5-phospho-alpha-D-ribose 1-diphosphate: step 4/9. This is 1-(5-phosphoribosyl)-5-[(5-phosphoribosylamino)methylideneamino] imidazole-4-carboxamide isomerase from Herpetosiphon aurantiacus (strain ATCC 23779 / DSM 785 / 114-95).